The primary structure comprises 529 residues: Bifunctional purine biosynthesis protein PurH (529 aa).

The 148-residue stretch at 1–148 (MQQRRPVRRA…KNHKDVAIVV (148 aa)) folds into the MGS-like domain.

It belongs to the PurH family.

The enzyme catalyses (6R)-10-formyltetrahydrofolate + 5-amino-1-(5-phospho-beta-D-ribosyl)imidazole-4-carboxamide = 5-formamido-1-(5-phospho-D-ribosyl)imidazole-4-carboxamide + (6S)-5,6,7,8-tetrahydrofolate. It catalyses the reaction IMP + H2O = 5-formamido-1-(5-phospho-D-ribosyl)imidazole-4-carboxamide. It functions in the pathway purine metabolism; IMP biosynthesis via de novo pathway; 5-formamido-1-(5-phospho-D-ribosyl)imidazole-4-carboxamide from 5-amino-1-(5-phospho-D-ribosyl)imidazole-4-carboxamide (10-formyl THF route): step 1/1. The protein operates within purine metabolism; IMP biosynthesis via de novo pathway; IMP from 5-formamido-1-(5-phospho-D-ribosyl)imidazole-4-carboxamide: step 1/1. The chain is Bifunctional purine biosynthesis protein PurH from Salmonella dublin (strain CT_02021853).